The following is a 101-amino-acid chain: NAD(P)H-quinone oxidoreductase subunit 4L, chloroplastic (101 aa).

3 helical membrane passes run 2 to 22 (MFEH…YGLI), 32 to 52 (ICLE…SDLF), and 61 to 81 (IFAI…LSIL).

Belongs to the complex I subunit 4L family. In terms of assembly, NDH is composed of at least 16 different subunits, 5 of which are encoded in the nucleus.

The protein localises to the plastid. Its subcellular location is the chloroplast thylakoid membrane. It carries out the reaction a plastoquinone + NADH + (n+1) H(+)(in) = a plastoquinol + NAD(+) + n H(+)(out). The catalysed reaction is a plastoquinone + NADPH + (n+1) H(+)(in) = a plastoquinol + NADP(+) + n H(+)(out). In terms of biological role, NDH shuttles electrons from NAD(P)H:plastoquinone, via FMN and iron-sulfur (Fe-S) centers, to quinones in the photosynthetic chain and possibly in a chloroplast respiratory chain. The immediate electron acceptor for the enzyme in this species is believed to be plastoquinone. Couples the redox reaction to proton translocation, and thus conserves the redox energy in a proton gradient. The polypeptide is NAD(P)H-quinone oxidoreductase subunit 4L, chloroplastic (Oryza nivara (Indian wild rice)).